The primary structure comprises 141 residues: Large ribosomal subunit protein uL11 (141 aa).

The protein belongs to the universal ribosomal protein uL11 family. In terms of assembly, part of the ribosomal stalk of the 50S ribosomal subunit. Interacts with L10 and the large rRNA to form the base of the stalk. L10 forms an elongated spine to which L12 dimers bind in a sequential fashion forming a multimeric L10(L12)X complex. Post-translationally, one or more lysine residues are methylated.

Functionally, forms part of the ribosomal stalk which helps the ribosome interact with GTP-bound translation factors. This is Large ribosomal subunit protein uL11 from Campylobacter jejuni subsp. jejuni serotype O:6 (strain 81116 / NCTC 11828).